A 325-amino-acid polypeptide reads, in one-letter code: Tartrate-resistant acid phosphatase type 5 (325 aa).

The first 21 residues, 1–21 (MDMWTALLILQALLLPSLADG), serve as a signal peptide directing secretion. The Fe cation site is built by Asp33, Asp71, Tyr74, and Asn110. Asn116 and Asn147 each carry an N-linked (GlcNAc...) asparagine glycan. A disulfide bridge connects residues Cys161 and Cys219. Residues His205, His240, and His242 each contribute to the Fe cation site.

Belongs to the metallophosphoesterase superfamily. Purple acid phosphatase family. Exists either as monomer or, after proteolytic processing, as a dimer of two chains linked by disulfide bond(s). Requires Fe cation as cofactor.

Its subcellular location is the lysosome. The enzyme catalyses a phosphate monoester + H2O = an alcohol + phosphate. Functionally, involved in osteopontin/bone sialoprotein dephosphorylation. Its expression seems to increase in certain pathological states such as Gaucher and Hodgkin diseases, the hairy cell, the B-cell, and the T-cell leukemias. The polypeptide is Tartrate-resistant acid phosphatase type 5 (ACP5) (Homo sapiens (Human)).